Consider the following 369-residue polypeptide: Protein disulfide-isomerase erp38 (369 aa).

The first 18 residues, 1-18 (MVLLKSLVVASLAAAVAA), serve as a signal peptide directing secretion. Thioredoxin domains are found at residues 19-130 (KSAV…EKTG) and 131-251 (VKAR…EKAG). Residues cysteine 50, cysteine 53, cysteine 170, and cysteine 173 each act as nucleophile in the active site. 2 disulfides stabilise this stretch: cysteine 50-cysteine 53 and cysteine 170-cysteine 173. The short motif at 366-369 (KEEL) is the Prevents secretion from ER element.

This sequence belongs to the protein disulfide isomerase family.

It localises to the endoplasmic reticulum lumen. The catalysed reaction is Catalyzes the rearrangement of -S-S- bonds in proteins.. This Neurospora crassa (strain ATCC 24698 / 74-OR23-1A / CBS 708.71 / DSM 1257 / FGSC 987) protein is Protein disulfide-isomerase erp38 (erp38).